The sequence spans 698 residues: Iron-sulfur clusters transporter ATM1, mitochondrial (698 aa).

The N-terminal 23 residues, 1 to 23 (MIPQLLQRSSRACPRYNPALYRL), are a transit peptide targeting the mitochondrion. At 24–113 (STTSQQRPGL…PKDDWGTKLR (90 aa)) the chain is on the mitochondrial matrix side. The disordered stretch occupies residues 32–63 (GLTQTFWTSAPRREQPRTPTDSKPTTTKPSAV). Low complexity predominate over residues 48–61 (RTPTDSKPTTTKPS). A helical transmembrane segment spans residues 114–135 (VSLAVSLLIGAKVLNVQVPFYF). The ABC transmembrane type-1 domain occupies 114-404 (VSLAVSLLIG…LGSVYRELRQ (291 aa)). Topologically, residues 136–158 (KSIVDSMNIDVAAVGGTATTVAG) are mitochondrial intermembrane. A helical transmembrane segment spans residues 159–182 (AMILAYGASRIGATVFQELRNAVF). Residues 183-231 (ASVAQNAIRKVACNVFDHLLRLDLTFHLSKQTGGLTRALDRGTKGISFI) are Mitochondrial matrix-facing. Residues 232 to 255 (LSSMVFHVLPTALEISMVCGILTY) form a helical membrane-spanning segment. Residue asparagine 256 is a topological domain, mitochondrial intermembrane. A helical membrane pass occupies residues 257-277 (YGAKFAALTVLTMVSYTAFTI). Residues 278-343 (WTTAWRTKFR…NSIKVATSLA (66 aa)) are Mitochondrial matrix-facing. Glutathione contacts are provided by residues 283–287 (RTKFR) and 346–349 (NSGQ). The helical transmembrane segment at 344–362 (LLNSGQNIIFSSALTGMMY) threads the bilayer. The Mitochondrial intermembrane portion of the chain corresponds to 363 to 377 (LAANGVAEGTLTVGD). The helical transmembrane segment at 378 to 399 (LVMVNQLVFQLSVPLNFLGSVY) threads the bilayer. Residue glycine 396 coordinates glutathione. Over 400–698 (RELRQSLLDM…EEENDEQKKN (299 aa)) the chain is Mitochondrial matrix. The ABC transporter domain maps to 439 to 675 (IKFENVNFAY…DGVYAELWSA (237 aa)). ATP-binding positions include tyrosine 448 and 472–483 (GPSGCGKSTLLR). The segment at 679–698 (MFGEDGKEKSEEENDEQKKN) is disordered. Basic and acidic residues predominate over residues 682-698 (EDGKEKSEEENDEQKKN).

Belongs to the ABC transporter superfamily. ABCB family. Heavy Metal importer (TC 3.A.1.210) subfamily. As to quaternary structure, homodimer.

It localises to the mitochondrion inner membrane. In terms of biological role, performs an essential function in the generation of cytoplasmic iron-sulfur proteins by mediating the ATP-dependent export of Fe/S cluster precursors synthesized by NFS1 and other mitochondrial proteins. Hydrolyzes ATP. Binds glutathione and may function by transporting a glutathione-conjugated iron-sulfur compound. In Gibberella zeae (strain ATCC MYA-4620 / CBS 123657 / FGSC 9075 / NRRL 31084 / PH-1) (Wheat head blight fungus), this protein is Iron-sulfur clusters transporter ATM1, mitochondrial.